A 950-amino-acid chain; its full sequence is Bifunctional glutamine synthetase adenylyltransferase/adenylyl-removing enzyme (950 aa).

An adenylyl removase region spans residues 1-443 (MSLPSPLIPV…VFVTLIGDEE (443 aa)). The segment at 450–950 (ERHFNELWDM…WQEWLESSTI (501 aa)) is adenylyl transferase.

Belongs to the GlnE family. The cofactor is Mg(2+).

It carries out the reaction [glutamine synthetase]-O(4)-(5'-adenylyl)-L-tyrosine + phosphate = [glutamine synthetase]-L-tyrosine + ADP. The enzyme catalyses [glutamine synthetase]-L-tyrosine + ATP = [glutamine synthetase]-O(4)-(5'-adenylyl)-L-tyrosine + diphosphate. Its function is as follows. Involved in the regulation of glutamine synthetase GlnA, a key enzyme in the process to assimilate ammonia. When cellular nitrogen levels are high, the C-terminal adenylyl transferase (AT) inactivates GlnA by covalent transfer of an adenylyl group from ATP to specific tyrosine residue of GlnA, thus reducing its activity. Conversely, when nitrogen levels are low, the N-terminal adenylyl removase (AR) activates GlnA by removing the adenylyl group by phosphorolysis, increasing its activity. The regulatory region of GlnE binds the signal transduction protein PII (GlnB) which indicates the nitrogen status of the cell. This chain is Bifunctional glutamine synthetase adenylyltransferase/adenylyl-removing enzyme, found in Vibrio vulnificus (strain CMCP6).